Consider the following 372-residue polypeptide: Aminomethyltransferase (372 aa).

It belongs to the GcvT family. In terms of assembly, the glycine cleavage system is composed of four proteins: P, T, L and H.

It catalyses the reaction N(6)-[(R)-S(8)-aminomethyldihydrolipoyl]-L-lysyl-[protein] + (6S)-5,6,7,8-tetrahydrofolate = N(6)-[(R)-dihydrolipoyl]-L-lysyl-[protein] + (6R)-5,10-methylene-5,6,7,8-tetrahydrofolate + NH4(+). Functionally, the glycine cleavage system catalyzes the degradation of glycine. This is Aminomethyltransferase from Burkholderia mallei (strain NCTC 10247).